The primary structure comprises 250 residues: Ribose-5-phosphate isomerase A (250 aa).

Substrate-binding positions include 33 to 36 (TGST), 89 to 92 (DGAD), and 102 to 105 (KGGG). Glu-111 serves as the catalytic Proton acceptor. Position 129 (Lys-129) interacts with substrate.

Belongs to the ribose 5-phosphate isomerase family. In terms of assembly, homodimer.

It carries out the reaction aldehydo-D-ribose 5-phosphate = D-ribulose 5-phosphate. It functions in the pathway carbohydrate degradation; pentose phosphate pathway; D-ribose 5-phosphate from D-ribulose 5-phosphate (non-oxidative stage): step 1/1. Its function is as follows. Catalyzes the reversible conversion of ribose-5-phosphate to ribulose 5-phosphate. This Cereibacter sphaeroides (strain ATCC 17025 / ATH 2.4.3) (Rhodobacter sphaeroides) protein is Ribose-5-phosphate isomerase A.